The following is an 83-amino-acid chain: RNA-binding protein Hfq (83 aa).

One can recognise a Sm domain in the interval 9–68; it reads DPYLNALRKERIPVSIFLVNGIKLQGQIESFDQFVILLKNTVSQMVYKHAISTVVPARNV.

The protein belongs to the Hfq family. As to quaternary structure, homohexamer.

RNA chaperone that binds small regulatory RNA (sRNAs) and mRNAs to facilitate mRNA translational regulation in response to envelope stress, environmental stress and changes in metabolite concentrations. Also binds with high specificity to tRNAs. This chain is RNA-binding protein Hfq, found in Hahella chejuensis (strain KCTC 2396).